The following is a 445-amino-acid chain: Aminopeptidase S (445 aa).

Positions 1-45 (MRPNRFSLRRSPTAVAAVALAAVLAAGAPAAQAAGAAAPTAAAAA) are cleaved as a signal peptide. The Ca(2+) site is built by aspartate 48 and isoleucine 49. Zn(2+) contacts are provided by histidine 130 and aspartate 142. The active-site Proton acceptor is glutamate 176. 3 residues coordinate Zn(2+): glutamate 177, aspartate 205, and histidine 292. Cysteine 290 and cysteine 295 form a disulfide bridge. Aspartate 307 and aspartate 311 together coordinate Ca(2+). In terms of domain architecture, P/Homo B spans 325-445 (GEPPTGEGVF…GYIDSWKLTF (121 aa)). Positions 330-445 (GEGVFSNTTD…GYIDSWKLTF (116 aa)) are cleaved as a propeptide — removed in mature form.

It belongs to the peptidase M28 family. M28A subfamily. As to quaternary structure, monomer. Ca(2+) serves as cofactor. The cofactor is Zn(2+). Requires Mn(2+) as cofactor. Co(2+) is required as a cofactor.

Its subcellular location is the secreted. The enzyme catalyses Release of an N-terminal amino acid with a preference for large hydrophobic amino-terminus residues.. Its activity is regulated as follows. Calcium activates the enzyme, inhibited by 1,10-phenanthroline, EDTA and EGTA. End-product inhibited by L-amino acids. Non-competitively inhibited by NaF and NaH(2)PO(4). An exopeptidase specific for larger hydrophobic amino acids (especially leucine), no cleavage occurs if the next residue is proline. This Streptomyces griseus subsp. griseus (strain JCM 4626 / CBS 651.72 / NBRC 13350 / KCC S-0626 / ISP 5235) protein is Aminopeptidase S.